A 533-amino-acid chain; its full sequence is Retinoid isomerohydrolase (533 aa).

Ser2 bears the N-acetylserine mark. The S-palmitoyl cysteine; in membrane form moiety is linked to residue Cys112. His180 is a binding site for Fe cation. Cys231 carries S-palmitoyl cysteine; in membrane form lipidation. Positions 241 and 313 each coordinate Fe cation. Residues Cys329 and Cys330 are each lipidated (S-palmitoyl cysteine; in membrane form). His527 is a Fe cation binding site.

The protein belongs to the carotenoid oxygenase family. It depends on Fe(2+) as a cofactor. Post-translationally, palmitoylation by LRAT regulates ligand binding specificity; the palmitoylated form (membrane form) specifically binds all-trans-retinyl-palmitate, while the soluble unpalmitoylated form binds all-trans-retinol (vitamin A). Retinal pigment epithelium specific.

The protein localises to the cell membrane. The enzyme catalyses an all-trans-retinyl ester + H2O = 11-cis-retinol + a fatty acid + H(+). The catalysed reaction is lutein = (3R,3'S)-zeaxanthin. It carries out the reaction all-trans-retinyl hexadecanoate + H2O = 11-cis-retinol + hexadecanoate + H(+). In terms of biological role, critical isomerohydrolase in the retinoid cycle involved in regeneration of 11-cis-retinal, the chromophore of rod and cone opsins. Catalyzes the cleavage and isomerization of all-trans-retinyl fatty acid esters to 11-cis-retinol which is further oxidized by 11-cis retinol dehydrogenase to 11-cis-retinal for use as visual chromophore. Essential for the production of 11-cis retinal for both rod and cone photoreceptors. Also capable of catalyzing the isomerization of lutein to meso-zeaxanthin an eye-specific carotenoid. The soluble form binds vitamin A (all-trans-retinol), making it available for LRAT processing to all-trans-retinyl ester. The membrane form, palmitoylated by LRAT, binds all-trans-retinyl esters, making them available for IMH (isomerohydrolase) processing to all-cis-retinol. The soluble form is regenerated by transferring its palmitoyl groups onto 11-cis-retinol, a reaction catalyzed by LRAT. The polypeptide is Retinoid isomerohydrolase (RPE65) (Cynops pyrrhogaster (Japanese fire-bellied newt)).